The primary structure comprises 270 residues: 4-hydroxy-tetrahydrodipicolinate reductase (270 aa).

Residue 7 to 12 (GVSGRM) coordinates NAD(+). Arg34 lines the NADP(+) pocket. Residues 97 to 99 (GTT) and 121 to 124 (SGNM) each bind NAD(+). His155 functions as the Proton donor/acceptor in the catalytic mechanism. Position 156 (His156) interacts with (S)-2,3,4,5-tetrahydrodipicolinate. Residue Lys159 is the Proton donor of the active site. Position 165-166 (165-166 (GT)) interacts with (S)-2,3,4,5-tetrahydrodipicolinate.

It belongs to the DapB family.

The protein resides in the cytoplasm. The catalysed reaction is (S)-2,3,4,5-tetrahydrodipicolinate + NAD(+) + H2O = (2S,4S)-4-hydroxy-2,3,4,5-tetrahydrodipicolinate + NADH + H(+). It catalyses the reaction (S)-2,3,4,5-tetrahydrodipicolinate + NADP(+) + H2O = (2S,4S)-4-hydroxy-2,3,4,5-tetrahydrodipicolinate + NADPH + H(+). It participates in amino-acid biosynthesis; L-lysine biosynthesis via DAP pathway; (S)-tetrahydrodipicolinate from L-aspartate: step 4/4. Functionally, catalyzes the conversion of 4-hydroxy-tetrahydrodipicolinate (HTPA) to tetrahydrodipicolinate. The polypeptide is 4-hydroxy-tetrahydrodipicolinate reductase (Allorhizobium ampelinum (strain ATCC BAA-846 / DSM 112012 / S4) (Agrobacterium vitis (strain S4))).